The primary structure comprises 383 residues: Polyketide synthase 4 (383 aa).

Cys-164 serves as the catalytic Nucleophile and monoketide coumarate intermediate.

Belongs to the thiolase-like superfamily. Chalcone/stilbene synthases family. In terms of assembly, homodimer. Expressed in fruits.

The enzyme catalyses 4-coumaroyl-CoA + malonyl-CoA + H2O + H(+) = 4-hydroxybenzalacetone + 2 CO2 + 2 CoA. The catalysed reaction is (E)-4-coumaroyl-CoA + 3 malonyl-CoA + 3 H(+) = 2',4,4',6'-tetrahydroxychalcone + 3 CO2 + 4 CoA. The protein operates within secondary metabolite biosynthesis; flavonoid biosynthesis. With respect to regulation, inhibited by glutathione. Functionally, bifunctional polyketide synthase producing both 4-hydroxybenzalacetone and naringenin chalcone. Can use p-coumaryl-CoA and ferulyl-CoA as substrates. Catalyzes the initial key reaction step in the biosynthesis of phenylbutanoids. The sequence is that of Polyketide synthase 4 (PKS4) from Rubus idaeus (Raspberry).